The sequence spans 207 residues: Cytochrome c biogenesis ATP-binding export protein CcmA (207 aa).

One can recognise an ABC transporter domain in the interval 4 to 207; the sequence is LEARELLCER…RISLTQTRAA (204 aa). ATP is bound at residue 36–43; it reads GSNGAGKT.

The protein belongs to the ABC transporter superfamily. CcmA exporter (TC 3.A.1.107) family. In terms of assembly, the complex is composed of two ATP-binding proteins (CcmA) and two transmembrane proteins (CcmB).

It is found in the cell inner membrane. It catalyses the reaction heme b(in) + ATP + H2O = heme b(out) + ADP + phosphate + H(+). In terms of biological role, part of the ABC transporter complex CcmAB involved in the biogenesis of c-type cytochromes; once thought to export heme, this seems not to be the case, but its exact role is uncertain. Responsible for energy coupling to the transport system. This chain is Cytochrome c biogenesis ATP-binding export protein CcmA, found in Shigella flexneri.